Here is a 123-residue protein sequence, read N- to C-terminus: Small ribosomal subunit protein uS13 (123 aa).

Residues 97–123 (PVRGQRTHTNAKTRKGRSKLPVAAKKK) form a disordered region.

Belongs to the universal ribosomal protein uS13 family. As to quaternary structure, part of the 30S ribosomal subunit. Forms a loose heterodimer with protein S19. Forms two bridges to the 50S subunit in the 70S ribosome.

Functionally, located at the top of the head of the 30S subunit, it contacts several helices of the 16S rRNA. In the 70S ribosome it contacts the 23S rRNA (bridge B1a) and protein L5 of the 50S subunit (bridge B1b), connecting the 2 subunits; these bridges are implicated in subunit movement. Contacts the tRNAs in the A and P-sites. This is Small ribosomal subunit protein uS13 from Ehrlichia canis (strain Jake).